A 445-amino-acid polypeptide reads, in one-letter code: MAKYKVGMVSLGCDKNRVDSEIMLGMVQNEYELTNNPKEADIIIVNTCGFIEKAKQESINTILDMAKYKTSHNCKLLIATGCLTQRYGDELLELMPEIDIMLGVNDYAKINEAIMNFINGNNEKVKATNYSDVSINEGLRLITTDKATAYLRIAEGCDNFCTYCIIPKIRGKFRSRALESIVEEAKKLAENGVKELILIAQDTTNYGIDIYGEKKLHLVLRELAKIEGIEWIRVLYCYPEAIYDELIKEISVNDKVCNYLDLPIQHISNNVLKRMGRKTTKEEIIGKINDLRKNVPNIVLRTSLIVGFPGESCEDFNELKDFIKTIKLDKVGVFTYSREEGTPAAIMEDQIDEEVKKAREEEIMLLQKEVSEEINKNKVGREYDVLIEKFNGEYYIGRSYEMAPDIDGCIYVKGNGAKKDQFCKVKIEKALEYDLVGVVCNESCK.

The region spanning 4-119 (YKVGMVSLGC…INEAIMNFIN (116 aa)) is the MTTase N-terminal domain. [4Fe-4S] cluster is bound by residues C13, C48, C82, C157, C161, and C164. Residues 143–373 (TTDKATAYLR…MLLQKEVSEE (231 aa)) form the Radical SAM core domain. The TRAM domain maps to 376–441 (KNKVGREYDV…EYDLVGVVCN (66 aa)).

The protein belongs to the methylthiotransferase family. RimO subfamily. [4Fe-4S] cluster serves as cofactor.

The protein localises to the cytoplasm. The enzyme catalyses L-aspartate(89)-[ribosomal protein uS12]-hydrogen + (sulfur carrier)-SH + AH2 + 2 S-adenosyl-L-methionine = 3-methylsulfanyl-L-aspartate(89)-[ribosomal protein uS12]-hydrogen + (sulfur carrier)-H + 5'-deoxyadenosine + L-methionine + A + S-adenosyl-L-homocysteine + 2 H(+). In terms of biological role, catalyzes the methylthiolation of an aspartic acid residue of ribosomal protein uS12. This Clostridium perfringens (strain 13 / Type A) protein is Ribosomal protein uS12 methylthiotransferase RimO.